Here is a 286-residue protein sequence, read N- to C-terminus: Dioxygenase trt7 (286 aa).

Fe cation is bound by residues His129, Asp131, and His206.

It belongs to the PhyH family. In terms of assembly, homodimer. The cofactor is Fe cation.

It participates in secondary metabolite biosynthesis; terpenoid biosynthesis. In terms of biological role, dioxygenase; part of the gene cluster that mediates the biosynthesis of terretonin, a fungal meroterpenoid that acts as a mycotoxin. The first step of the pathway is the synthesis of 3,5-dimethylorsellinic acid (DMOA) by the polyketide synthase trt4. DMOA is then prenylated into farnesyl-DMOA by the polyprenyl transferase trt2. Methylation by the methyltransferase trt5 then leads to farnesyl-DMOA methyl ester which is further subject to epoxidation by the FAD-dependent monooxygenase trt8 to yield epoxyfarnesyl-DMOA methyl ester. Cyclization of epoxyfarnesyl-DMOA methyl ester by the terpene cyclase trt1 leads to a tetracycle intermediate which is in turn converted to preterretonin. Dehydrogenase trt9 comes next to transform preterretonin to preterrenoid. The FAD-dependent monooxygenase trt3 is then required for the C-hydroxylation at C16 of preterrenoid to yield terrenoid. The cytochrome P450 trt6 catalyzes three successive oxidations to transform terrenoid into an unstable intermediate, which then undergoes the D-ring expansion and unusual rearrangement of the methoxy group to afford the core skeleton of terretonin. Trt14 catalyzes the D-ring expansion of terretonin involving intramolecular methoxy rearrangement as well as the hydrolysis of the expanded D-ring and the methyl ester moiety. Finally, the nonheme iron-dependent dioxygenase trt7 accomplishes the last two oxidation reactions steps to complete the biosynthesis of terretonin. Terretonin C is produced via spontaneous decarboxylation of the terretonin precursor. Another shunt product of the terretonin biosynthesis is dihydrofarnesyl-DMOA, derived from epoxyfarnesyl-DMOA through hydrolysis of the epoxide. In Aspergillus terreus (strain NIH 2624 / FGSC A1156), this protein is Dioxygenase trt7.